The chain runs to 377 residues: L-arabinitol 4-dehydrogenase (377 aa).

Zn(2+) contacts are provided by C66, H91, E92, C121, C124, C127, C135, and E176. NAD(+)-binding positions include 203-204, D224, R229, I296, and 320-322; these read PI and QYR.

This sequence belongs to the zinc-containing alcohol dehydrogenase family. As to quaternary structure, homotetramer. The cofactor is Zn(2+). The N-terminus is blocked.

It catalyses the reaction L-arabinitol + NAD(+) = L-xylulose + NADH + H(+). The protein operates within carbohydrate degradation; L-arabinose degradation via L-arabinitol; D-xylulose 5-phosphate from L-arabinose (fungal route): step 2/5. In terms of biological role, catalyzes the NAD-dependent oxidation of L-arabinitol to L-xylulose in the fungal L-arabinose catabolic pathway. L-arabinose catabolism is important for using plant material as a carbon source. Can partially compensate for xylitol dehydrogenase in xdh1 mutants. Also oxidizes galactitol to L-xylo-3-hexulose as an alternative to the standard Leloir pathway for D-galactose metabolism. NADP cannot act as a cosubstrate. This is L-arabinitol 4-dehydrogenase (lad1) from Hypocrea jecorina (Trichoderma reesei).